We begin with the raw amino-acid sequence, 1068 residues long: Putative protein TIC 214 N-terminal part (1068 aa).

6 helical membrane-spanning segments follow: residues Val11 to Ile31, Ile68 to Ile88, Leu92 to Ile112, Ile131 to Leu151, Phe166 to Leu186, and Phe213 to Ile233.

The protein belongs to the TIC214 family. As to quaternary structure, part of the Tic complex.

Its subcellular location is the plastid. The protein resides in the chloroplast inner membrane. In terms of biological role, involved in protein precursor import into chloroplasts. May be part of an intermediate translocation complex acting as a protein-conducting channel at the inner envelope. This is Putative protein TIC 214 N-terminal part from Marchantia polymorpha (Common liverwort).